Consider the following 260-residue polypeptide: DNA repair protein RecO (260 aa).

The protein belongs to the RecO family.

In terms of biological role, involved in DNA repair and RecF pathway recombination. The sequence is that of DNA repair protein RecO from Levilactobacillus brevis (strain ATCC 367 / BCRC 12310 / CIP 105137 / JCM 1170 / LMG 11437 / NCIMB 947 / NCTC 947) (Lactobacillus brevis).